Consider the following 72-residue polypeptide: UPF0352 protein swp_2271 (72 aa).

This sequence belongs to the UPF0352 family.

The chain is UPF0352 protein swp_2271 from Shewanella piezotolerans (strain WP3 / JCM 13877).